Consider the following 588-residue polypeptide: Aspartate--tRNA ligase (588 aa).

Glutamate 177 provides a ligand contact to L-aspartate. The tract at residues 201–204 (QLFK) is aspartate. Arginine 223 serves as a coordination point for L-aspartate. ATP-binding positions include 223–225 (RDE) and glutamine 232. Histidine 451 is an L-aspartate binding site. Residue glutamate 485 participates in ATP binding. Arginine 492 contributes to the L-aspartate binding site. 537 to 540 (GLDR) lines the ATP pocket.

It belongs to the class-II aminoacyl-tRNA synthetase family. Type 1 subfamily. Homodimer.

The protein localises to the cytoplasm. The catalysed reaction is tRNA(Asp) + L-aspartate + ATP = L-aspartyl-tRNA(Asp) + AMP + diphosphate. Functionally, catalyzes the attachment of L-aspartate to tRNA(Asp) in a two-step reaction: L-aspartate is first activated by ATP to form Asp-AMP and then transferred to the acceptor end of tRNA(Asp). This chain is Aspartate--tRNA ligase, found in Staphylococcus haemolyticus (strain JCSC1435).